Reading from the N-terminus, the 736-residue chain is Phosphoribosylformylglycinamidine synthase subunit PurL (736 aa).

His49 is an active-site residue. Positions 52 and 91 each coordinate ATP. Residue Glu93 coordinates Mg(2+). Substrate is bound by residues 94-97 and Arg116; that span reads SHNH. The active-site Proton acceptor is His95. A Mg(2+)-binding site is contributed by Asp117. Gln240 provides a ligand contact to substrate. Asp268 contacts Mg(2+). A substrate-binding site is contributed by 312–314; it reads ESQ. Residues Asp493 and Gly530 each coordinate ATP. Asn531 is a Mg(2+) binding site. Ser533 serves as a coordination point for substrate.

Belongs to the FGAMS family. Monomer. Part of the FGAM synthase complex composed of 1 PurL, 1 PurQ and 2 PurS subunits.

Its subcellular location is the cytoplasm. It carries out the reaction N(2)-formyl-N(1)-(5-phospho-beta-D-ribosyl)glycinamide + L-glutamine + ATP + H2O = 2-formamido-N(1)-(5-O-phospho-beta-D-ribosyl)acetamidine + L-glutamate + ADP + phosphate + H(+). It participates in purine metabolism; IMP biosynthesis via de novo pathway; 5-amino-1-(5-phospho-D-ribosyl)imidazole from N(2)-formyl-N(1)-(5-phospho-D-ribosyl)glycinamide: step 1/2. Functionally, part of the phosphoribosylformylglycinamidine synthase complex involved in the purines biosynthetic pathway. Catalyzes the ATP-dependent conversion of formylglycinamide ribonucleotide (FGAR) and glutamine to yield formylglycinamidine ribonucleotide (FGAM) and glutamate. The FGAM synthase complex is composed of three subunits. PurQ produces an ammonia molecule by converting glutamine to glutamate. PurL transfers the ammonia molecule to FGAR to form FGAM in an ATP-dependent manner. PurS interacts with PurQ and PurL and is thought to assist in the transfer of the ammonia molecule from PurQ to PurL. The sequence is that of Phosphoribosylformylglycinamidine synthase subunit PurL from Rhodopseudomonas palustris (strain HaA2).